The chain runs to 352 residues: 26S proteasome regulatory subunit rpn-8 (352 aa).

The MPN domain maps to 16–152 (VSVAPLVLLS…TDAYFAVDEI (137 aa)). Positions 303-352 (NRQQQEENDAKKKEGENGEKKEGADKKEGSPAAANGESKEKENSPKEKKK) are disordered. Composition is skewed to basic and acidic residues over residues 306–331 (QQEENDAKKKEGENGEKKEGADKKEG) and 339–352 (ESKEKENSPKEKKK).

The protein belongs to the peptidase M67A family.

Acts as a regulatory subunit of the 26S proteasome which is involved in the ATP-dependent degradation of ubiquitinated proteins. The sequence is that of 26S proteasome regulatory subunit rpn-8 (rpn-8) from Neurospora crassa (strain ATCC 24698 / 74-OR23-1A / CBS 708.71 / DSM 1257 / FGSC 987).